The following is a 185-amino-acid chain: Tumor necrosis factor receptor superfamily member 17 (185 aa).

At 1 to 49 (MAQQCFHSEYFDSLLHACKPCHLRCSNPPATCQPYCDPSVTSSVKGTYT) the chain is on the extracellular side. Residues 4-36 (QCFHSEYFDSLLHACKPCHLRCSNPPATCQPYC) form a TNFR-Cys repeat. 3 cysteine pairs are disulfide-bonded: Cys-5/Cys-18, Cys-21/Cys-32, and Cys-25/Cys-36. A helical; Signal-anchor for type III membrane protein transmembrane segment spans residues 50-70 (VLWIFLGLTLVLSLALFTISF). The Cytoplasmic segment spans residues 71–185 (LLRKMNPEAL…MGMEKPTHTR (115 aa)).

In terms of assembly, associates with TRAF1, TRAF2, TRAF3, TRAF5 and TRAF6. Detected in spleen, thymus, bone marrow and heart, and at lower levels in kidney and lung.

The protein resides in the membrane. In terms of biological role, receptor for TNFSF13B/BLyS/BAFF and TNFSF13/APRIL. Promotes B-cell survival and plays a role in the regulation of humoral immunity. Activates NF-kappa-B and JNK. The polypeptide is Tumor necrosis factor receptor superfamily member 17 (Tnfrsf17) (Mus musculus (Mouse)).